Here is a 469-residue protein sequence, read N- to C-terminus: Neuraminidase (469 aa).

Residues 1 to 9 (MNPNQKIIT) lie on the Intravirion side of the membrane. Residues 10 to 30 (IGSVSLTIATVCFLMQIAILV) traverse the membrane as a helical segment. The involved in apical transport and lipid raft association stretch occupies residues 11–33 (GSVSLTIATVCFLMQIAILVTTV). Over 31 to 469 (TTVTLHFRQY…DGADINLMPI (439 aa)) the chain is Virion surface. The interval 36–88 (HFRQYECDSPANNQVMPCEPTIIERNITEIVYLNNTTIEKEICPKLVEYRNWS) is hypervariable stalk region. N-linked (GlcNAc...) asparagine; by host glycosylation is found at N61, N69, N70, and N86. The head of neuraminidase stretch occupies residues 91 to 469 (QCKITGFAPF…DGADINLMPI (379 aa)). Disulfide bonds link C92/C417, C124/C129, C183/C230, C232/C237, C278/C291, C280/C289, C318/C337, and C421/C447. R118 provides a ligand contact to substrate. A glycan (N-linked (GlcNAc...) asparagine; by host) is linked at N146. The active-site Proton donor/acceptor is the D151. Substrate is bound at residue R152. Residues N200 and N234 are each glycosylated (N-linked (GlcNAc...) asparagine; by host). Substrate is bound at residue 276–277 (EE). R292 contacts substrate. Ca(2+)-binding residues include D293, G297, and D324. Residues 323-350 (GDTPRNNDRSSNSNCRNPNNERGNHGVK) form a disordered region. Residues 331–343 (RSSNSNCRNPNNE) are compositionally biased toward low complexity. R371 contacts substrate. Residue N402 is glycosylated (N-linked (GlcNAc...) asparagine; by host). Y406 serves as the catalytic Nucleophile.

Belongs to the glycosyl hydrolase 34 family. As to quaternary structure, homotetramer. The cofactor is Ca(2+). N-glycosylated.

Its subcellular location is the virion membrane. It localises to the host apical cell membrane. It carries out the reaction Hydrolysis of alpha-(2-&gt;3)-, alpha-(2-&gt;6)-, alpha-(2-&gt;8)- glycosidic linkages of terminal sialic acid residues in oligosaccharides, glycoproteins, glycolipids, colominic acid and synthetic substrates.. With respect to regulation, inhibited by the neuraminidase inhibitors zanamivir (Relenza) and oseltamivir (Tamiflu). These drugs interfere with the release of progeny virus from infected cells and are effective against all influenza strains. Resistance to neuraminidase inhibitors is quite rare. In terms of biological role, catalyzes the removal of terminal sialic acid residues from viral and cellular glycoconjugates. Cleaves off the terminal sialic acids on the glycosylated HA during virus budding to facilitate virus release. Additionally helps virus spread through the circulation by further removing sialic acids from the cell surface. These cleavages prevent self-aggregation and ensure the efficient spread of the progeny virus from cell to cell. Otherwise, infection would be limited to one round of replication. Described as a receptor-destroying enzyme because it cleaves a terminal sialic acid from the cellular receptors. May facilitate viral invasion of the upper airways by cleaving the sialic acid moieties on the mucin of the airway epithelial cells. Likely to plays a role in the budding process through its association with lipid rafts during intracellular transport. May additionally display a raft-association independent effect on budding. Plays a role in the determination of host range restriction on replication and virulence. Sialidase activity in late endosome/lysosome traffic seems to enhance virus replication. The sequence is that of Neuraminidase from Aves (Human).